The sequence spans 117 residues: Large ribosomal subunit protein bL17 (117 aa).

This sequence belongs to the bacterial ribosomal protein bL17 family. Part of the 50S ribosomal subunit. Contacts protein L32.

This chain is Large ribosomal subunit protein bL17, found in Campylobacter jejuni subsp. doylei (strain ATCC BAA-1458 / RM4099 / 269.97).